Here is a 361-residue protein sequence, read N- to C-terminus: 3-dehydroquinate synthase (361 aa).

Residues 104 to 108 (GVIGD), 128 to 129 (TT), Lys140, and Lys149 contribute to the NAD(+) site. Zn(2+)-binding residues include Glu182, His245, and His262.

It belongs to the sugar phosphate cyclases superfamily. Dehydroquinate synthase family. Requires NAD(+) as cofactor. It depends on Co(2+) as a cofactor. The cofactor is Zn(2+).

Its subcellular location is the cytoplasm. The enzyme catalyses 7-phospho-2-dehydro-3-deoxy-D-arabino-heptonate = 3-dehydroquinate + phosphate. Its pathway is metabolic intermediate biosynthesis; chorismate biosynthesis; chorismate from D-erythrose 4-phosphate and phosphoenolpyruvate: step 2/7. In terms of biological role, catalyzes the conversion of 3-deoxy-D-arabino-heptulosonate 7-phosphate (DAHP) to dehydroquinate (DHQ). This is 3-dehydroquinate synthase from Halalkalibacterium halodurans (strain ATCC BAA-125 / DSM 18197 / FERM 7344 / JCM 9153 / C-125) (Bacillus halodurans).